The sequence spans 734 residues: Cell surface glycoprotein gp138B (734 aa).

The signal sequence occupies residues 1–20; sequence MKIILTLSIFLICFLQLGQS. N-linked (GlcNAc...) asparagine glycans are attached at residues asparagine 58, asparagine 89, asparagine 124, asparagine 198, asparagine 224, asparagine 392, asparagine 420, asparagine 435, asparagine 482, asparagine 498, asparagine 523, asparagine 596, asparagine 605, asparagine 614, asparagine 621, and asparagine 630. An IPT/TIG domain is found at 504-592; it reads PFIKSYGFLE…SSNEVTFYYF (89 aa). A disordered region spans residues 678–712; that stretch reads GETPTPSTTPSTTPSTTPSTTPSSTPTQSPGDDGS. The segment covering 680-712 has biased composition (low complexity); the sequence is TPTPSTTPSTTPSTTPSTTPSSTPTQSPGDDGS. 4 consecutive repeat copies span residues 683-686, 687-690, 691-694, and 695-698. The tract at residues 683–698 is 4 X 4 AA tandem repeats of P-S-T-T; sequence PSTTPSTTPSTTPSTT. Glycine 708 carries the GPI-like-anchor amidated glycine lipid modification. Residues 709-734 constitute a propeptide, removed in mature form; sequence DDGSTSSTLSISFYLITLLLLTQQFI.

The sugar chains may play important roles in cell fusion. In terms of processing, the GPI-like-anchor contains a phosphoceramide group, rather than a phosphatidyl group.

The protein localises to the cell membrane. In terms of biological role, involved in the sexual cell fusion of D.discoideum. The protein is Cell surface glycoprotein gp138B (GP138B) of Dictyostelium discoideum (Social amoeba).